A 603-amino-acid chain; its full sequence is Golgin subfamily A member 8B (603 aa).

4 disordered regions span residues 1–82 (MAEE…NSRS), 95–125 (LKQQKKQVEHQLEEEKKANNEKQKAERELEG), 398–419 (TSAEKEPEAAVPASGTGGESSG), and 460–492 (PGDSAKDASPGGGHHQAGPGQGGEEGEAAGAAG). Over residues 46-66 (AASGGCHSSEASSSASSSLHA) the composition is skewed to low complexity. Residues 69 to 82 (SPCQEQAAVLNSRS) show a composition bias toward polar residues. 2 coiled-coil regions span residues 82–173 (SIKI…GELE) and 212–440 (LKGH…LELG). Over residues 100–124 (KQVEHQLEEEKKANNEKQKAERELE) the composition is skewed to basic and acidic residues. Over residues 469–482 (PGGGHHQAGPGQGG) the composition is skewed to gly residues. The tract at residues 491–603 (AGDGVAACGS…CWAWLPRRRR (113 aa)) is golgi-targeting domain.

The protein belongs to the GOLGA8 family. As to expression, highly expressed in brain, heart and kidney. Detected at lower levels in liver, thymus, spleen, lung and peripheral blood leukocytes.

It is found in the golgi apparatus. The protein localises to the golgi stack membrane. In terms of biological role, may be involved in maintaining Golgi structure. In Homo sapiens (Human), this protein is Golgin subfamily A member 8B (GOLGA8B).